Here is a 470-residue protein sequence, read N- to C-terminus: Ribulose bisphosphate carboxylase large chain (470 aa).

Asn-118 and Thr-168 together coordinate substrate. Residue Lys-170 is the Proton acceptor of the active site. Residue Lys-172 coordinates substrate. The Mg(2+) site is built by Lys-196, Asp-198, and Glu-199. Lys-196 carries the N6-carboxylysine modification. The active-site Proton acceptor is His-289. Residues Arg-290, His-322, and Ser-374 each coordinate substrate. Positions 459–465 (EIKFEFD) match the Interacts with RbcX2 motif.

It belongs to the RuBisCO large chain family. Type I subfamily. In terms of assembly, heterohexadecamer of 8 large chains and 8 small chains; disulfide-linked. The disulfide link is formed within the large subunit homodimers. The cofactor is Mg(2+). In terms of processing, the disulfide bond which can form in the large chain dimeric partners within the hexadecamer appears to be associated with oxidative stress and protein turnover.

Its subcellular location is the carboxysome. The enzyme catalyses 2 (2R)-3-phosphoglycerate + 2 H(+) = D-ribulose 1,5-bisphosphate + CO2 + H2O. It carries out the reaction D-ribulose 1,5-bisphosphate + O2 = 2-phosphoglycolate + (2R)-3-phosphoglycerate + 2 H(+). Functionally, ruBisCO catalyzes two reactions: the carboxylation of D-ribulose 1,5-bisphosphate, the primary event in carbon dioxide fixation, as well as the oxidative fragmentation of the pentose substrate in the photorespiration process. Both reactions occur simultaneously and in competition at the same active site. The polypeptide is Ribulose bisphosphate carboxylase large chain (Picosynechococcus sp. (strain ATCC 27264 / PCC 7002 / PR-6) (Agmenellum quadruplicatum)).